The sequence spans 374 residues: Glutamate 5-kinase (374 aa).

Lysine 13 is an ATP binding site. The substrate site is built by serine 54, aspartate 141, and asparagine 153. Position 173-174 (173-174 (SD)) interacts with ATP. The 78-residue stretch at 278–355 (KGTVHLDSGA…NEIESVLGYP (78 aa)) folds into the PUA domain.

This sequence belongs to the glutamate 5-kinase family.

Its subcellular location is the cytoplasm. It carries out the reaction L-glutamate + ATP = L-glutamyl 5-phosphate + ADP. Its pathway is amino-acid biosynthesis; L-proline biosynthesis; L-glutamate 5-semialdehyde from L-glutamate: step 1/2. Catalyzes the transfer of a phosphate group to glutamate to form L-glutamate 5-phosphate. The chain is Glutamate 5-kinase from Roseobacter denitrificans (strain ATCC 33942 / OCh 114) (Erythrobacter sp. (strain OCh 114)).